Consider the following 494-residue polypeptide: Cytochrome P450 2B11 (494 aa).

Phosphoserine; by PKA is present on Ser128. Cys436 serves as a coordination point for heme.

The protein belongs to the cytochrome P450 family. Heme serves as cofactor.

The protein localises to the endoplasmic reticulum membrane. It localises to the microsome membrane. It carries out the reaction an organic molecule + reduced [NADPH--hemoprotein reductase] + O2 = an alcohol + oxidized [NADPH--hemoprotein reductase] + H2O + H(+). In terms of biological role, cytochromes P450 are a group of heme-thiolate monooxygenases. In liver microsomes, this enzyme is involved in an NADPH-dependent electron transport pathway. This isozyme seems responsible for metabolism of 2,2',4,4',5,5'-hexachlorobiphenyl. This Canis lupus familiaris (Dog) protein is Cytochrome P450 2B11 (CYP2B11).